Reading from the N-terminus, the 712-residue chain is Ribosome-releasing factor 2, mitochondrial (712 aa).

Residues Met1–Tyr28 constitute a mitochondrion transit peptide. Positions Asp30–Asn309 constitute a tr-type G domain. GTP-binding positions include Ala39–Thr46, Asp103–His107, and Asn157–Asp160.

This sequence belongs to the TRAFAC class translation factor GTPase superfamily. Classic translation factor GTPase family. EF-G/EF-2 subfamily.

It is found in the mitochondrion. Functionally, mitochondrial GTPase that mediates the disassembly of ribosomes from messenger RNA at the termination of mitochondrial protein biosynthesis. Not involved in the GTP-dependent ribosomal translocation step during translation elongation. This Drosophila virilis (Fruit fly) protein is Ribosome-releasing factor 2, mitochondrial.